A 157-amino-acid chain; its full sequence is Endoribonuclease YbeY (157 aa).

Residues His121, His125, and His131 each coordinate Zn(2+).

Belongs to the endoribonuclease YbeY family. Zn(2+) serves as cofactor.

The protein localises to the cytoplasm. Functionally, single strand-specific metallo-endoribonuclease involved in late-stage 70S ribosome quality control and in maturation of the 3' terminus of the 16S rRNA. In Salinispora tropica (strain ATCC BAA-916 / DSM 44818 / JCM 13857 / NBRC 105044 / CNB-440), this protein is Endoribonuclease YbeY.